We begin with the raw amino-acid sequence, 84 residues long: U21-theraphotoxin-Cg1c (84 aa).

An N-terminal signal peptide occupies residues 1-21 (MKVSVLITLAVLGVMFLLTSA). Residues 22 to 47 (EERGSDQMDSPAWLKSMERIFQSEER) constitute a propeptide that is removed on maturation. Cystine bridges form between cysteine 49/cysteine 63, cysteine 56/cysteine 68, and cysteine 62/cysteine 76.

It belongs to the neurotoxin 10 (Hwtx-1) family. 05 (F4a) subfamily. As to expression, expressed by the venom gland.

It is found in the secreted. Functionally, probable ion channel inhibitor. In Chilobrachys guangxiensis (Chinese earth tiger tarantula), this protein is U21-theraphotoxin-Cg1c.